A 351-amino-acid polypeptide reads, in one-letter code: MYSLARPLLFSLDAERAHALALRSIDTAYRTGTTSLLSTRPVPLPTPAFGLMFPNPVGLGAGLDKNGEHIDALLALGFGFVEIGTVTPRAQDGNPKPRMFRLPEYQAVINRMGFNNLGVDALVANVQRARRRGGLLGINIGKNKDTPNEEATSDYRYCMERVYPLADYITVNISSPNTAGLRELQEEQSLRRLISDLRETQEALGAQHGKRVPMLVKVAPDLNDRDIDAAARVLADLAVDGVIATNTTVTRPLIANHPLAAEAGGLSGAPLLGQSTLVLRRLRARLPESIPLIGVGGINSGADAVAKMAAGASLVQCYSGLVYRGPQLVGECVNAIRRRREAPSGGAVAPL.

Residues 61–65 (AGLDK) and Thr85 contribute to the FMN site. Position 65 (Lys65) interacts with substrate. 110–114 (NRMGF) lines the substrate pocket. 2 residues coordinate FMN: Asn139 and Asn172. Residue Asn172 coordinates substrate. Residue Ser175 is the Nucleophile of the active site. Residue Asn177 participates in substrate binding. FMN contacts are provided by Lys217 and Thr245. 246–247 (NT) provides a ligand contact to substrate. FMN is bound by residues Gly268, Gly297, and 318 to 319 (YS).

This sequence belongs to the dihydroorotate dehydrogenase family. Type 2 subfamily. In terms of assembly, monomer. FMN serves as cofactor.

Its subcellular location is the cell membrane. It carries out the reaction (S)-dihydroorotate + a quinone = orotate + a quinol. It participates in pyrimidine metabolism; UMP biosynthesis via de novo pathway; orotate from (S)-dihydroorotate (quinone route): step 1/1. Catalyzes the conversion of dihydroorotate to orotate with quinone as electron acceptor. The sequence is that of Dihydroorotate dehydrogenase (quinone) from Xanthomonas oryzae pv. oryzae (strain MAFF 311018).